We begin with the raw amino-acid sequence, 586 residues long: MGGAARERGRKDAALPGAGLPPQQRRLGDGVYDTFMMIDETKCPPYTNTLCNPSEAPVSRRLNITTEPFTRGHTQHFVSGGVMKVEQLFQEFGSRRTSTLQSDGVSNSEKSSPASQGKSSDSLGTVKCSLSSRPSKVLPLTPEQALKQYKHHLTAYEKLEIISYPEIYFVGPNAKKRQGVIGGPNNGGYDDADGAYIHVPRDHLAYRYEVLKIIGKGSFGQVARVYDHKLRQYVALKMVRNEKRFHRQAAEEIRILEHLKKQDKTGSMNVIHMLESFTFRNHVCMAFELLSIDLYELIKKNKFQGFSVQLVRKFAQSILQSLDALHKNKIIHCDLKPENILLKHHGRSATKVIDFGSSCFEYQKLYTYIQSRFYRAPEIILGCRYSTPIDIWSFGCILAELLTGQPLFPGEDEGDQLACMMELLGMPPQKLLEQSKRAKYFINSKGLPRYCSVTTQTDGRVVLLGGRSRRGKKRGPPGSKDWAAALKGCDDYLFIEFLKRCLQWDPSARLTPAQALRHPWISKSAPRPLTTDKVSGKRVVNPTNAFQGLGSKLPPVVGIASKLKANLMSETSGSIPLCSVLPKLIS.

Positions 1–13 (MGGAARERGRKDA) are enriched in basic and acidic residues. The tract at residues 1–187 (MGGAARERGR…QGVIGGPNNG (187 aa)) is disordered. Positions 208–521 (YEVLKIIGKG…PAQALRHPWI (314 aa)) constitute a Protein kinase domain. ATP contacts are provided by residues 214 to 222 (IGKGSFGQV), Lys-237, and 287 to 290 (FELL). Asp-334 acts as the Proton acceptor in catalysis. Tyr-368 carries the post-translational modification Phosphotyrosine. A Nuclear localization signal motif is present at residues 467–480 (RSRRGKKRGPPGSK).

It belongs to the protein kinase superfamily. CMGC Ser/Thr protein kinase family. MNB/DYRK subfamily. Interacts with SIRT1. Mg(2+) is required as a cofactor. In terms of processing, protein kinase activity is activated following autophosphorylation at Tyr-368. Post-translationally, ubiquitinated at anaphase by the anaphase-promoting complex (APC/C), leading to its degradation by the proteasome. As to expression, expressed predominantly in testis. Expressed in late pachytene spermatocytes.

Its subcellular location is the nucleus. It localises to the cytoplasm. It is found in the nucleus speckle. The protein resides in the cytoplasmic granule. The protein localises to the cytoskeleton. Its subcellular location is the microtubule organizing center. It localises to the centrosome. It catalyses the reaction L-seryl-[protein] + ATP = O-phospho-L-seryl-[protein] + ADP + H(+). The catalysed reaction is L-threonyl-[protein] + ATP = O-phospho-L-threonyl-[protein] + ADP + H(+). The enzyme catalyses L-tyrosyl-[protein] + ATP = O-phospho-L-tyrosyl-[protein] + ADP + H(+). Its activity is regulated as follows. Protein kinase activity is activated following autophosphorylation at Tyr-368. Dual-specificity protein kinase that promotes disassembly of several types of membraneless organelles during mitosis, such as stress granules, nuclear speckles and pericentriolar material. Dual-specificity tyrosine-regulated kinases (DYRKs) autophosphorylate a critical tyrosine residue in their activation loop and phosphorylate their substrate on serine and threonine residues. Acts as a central dissolvase of membraneless organelles during the G2-to-M transition, after the nuclear-envelope breakdown: acts by mediating phosphorylation of multiple serine and threonine residues in unstructured domains of proteins, such as SRRM1 and PCM1. Does not mediate disassembly of all membraneless organelles: disassembly of P-body and nucleolus is not regulated by DYRK3. Dissolution of membraneless organelles at the onset of mitosis is also required to release mitotic regulators, such as ZNF207, from liquid-unmixed organelles where they are sequestered and keep them dissolved during mitosis. Regulates mTORC1 by mediating the dissolution of stress granules: during stressful conditions, DYRK3 partitions from the cytosol to the stress granule, together with mTORC1 components, which prevents mTORC1 signaling. When stress signals are gone, the kinase activity of DYRK3 is required for the dissolution of stress granule and mTORC1 relocation to the cytosol: acts by mediating the phosphorylation of the mTORC1 inhibitor AKT1S1, allowing full reactivation of mTORC1 signaling. Also acts as a negative regulator of EPO-dependent erythropoiesis: may place an upper limit on red cell production during stress erythropoiesis. Inhibits cell death due to cytokine withdrawal in hematopoietic progenitor cells. Promotes cell survival upon genotoxic stress through phosphorylation of SIRT1: this in turn inhibits p53/TP53 activity and apoptosis. The protein is Dual specificity tyrosine-phosphorylation-regulated kinase 3 of Rattus norvegicus (Rat).